A 541-amino-acid polypeptide reads, in one-letter code: Membrane protein insertase YidC (541 aa).

6 helical membrane passes run 7–27, 289–309, 356–376, 430–450, 463–483, and 498–518; these read FLIVAIFLSVFLLWDKWGVTH, YLLTVVNPELVIAPGAIVTLP, IIHSWGYSIITLTLLIKLAFY, LPILVQIPVFISLYWVLLEMV, LSAQDPYYILPLIMGVSMFAQ, and IMMALPFVFTIFFLWFPSGLV.

Belongs to the OXA1/ALB3/YidC family. Type 1 subfamily. In terms of assembly, interacts with the Sec translocase complex via SecD. Specifically interacts with transmembrane segments of nascent integral membrane proteins during membrane integration.

It is found in the cell inner membrane. In terms of biological role, required for the insertion and/or proper folding and/or complex formation of integral membrane proteins into the membrane. Involved in integration of membrane proteins that insert both dependently and independently of the Sec translocase complex, as well as at least some lipoproteins. Aids folding of multispanning membrane proteins. In Ruthia magnifica subsp. Calyptogena magnifica, this protein is Membrane protein insertase YidC.